A 358-amino-acid chain; its full sequence is Alanine racemase (358 aa).

The active-site Proton acceptor; specific for D-alanine is the Lys35. An N6-(pyridoxal phosphate)lysine modification is found at Lys35. Residue Arg130 coordinates substrate. Residue Tyr255 is the Proton acceptor; specific for L-alanine of the active site. Met303 is a substrate binding site.

Belongs to the alanine racemase family. Requires pyridoxal 5'-phosphate as cofactor.

The enzyme catalyses L-alanine = D-alanine. Its pathway is amino-acid biosynthesis; D-alanine biosynthesis; D-alanine from L-alanine: step 1/1. In terms of biological role, catalyzes the interconversion of L-alanine and D-alanine. May also act on other amino acids. The protein is Alanine racemase (alr) of Shewanella loihica (strain ATCC BAA-1088 / PV-4).